Reading from the N-terminus, the 557-residue chain is Vacuolar protein sorting-associated protein 30 (557 aa).

Disordered stretches follow at residues 93-149 (DDDN…ENQQ) and 218-238 (NKEI…SEKE). A compositionally biased stretch (acidic residues) spans 135 to 147 (DEEEQEATDEDEN). At T142 the chain carries Phosphothreonine. Residues 189–322 (LINRLKSEYD…QLDKLRKINI (134 aa)) adopt a coiled-coil conformation. Residues 320 to 539 (INIFNATFKI…LAFSSNLLSK (220 aa)) form a BARA region. The tract at residues 515 to 540 (WTTAMKFLLTNVKWLLAFSSNLLSKS) is required for membrane-association, autophagic function during starvation and normal autophagosome morphology.

Belongs to the beclin family. Component of the autophagy-specific VPS34 PI3-kinase complex I composed of VPS15, VPS30, VPS34, ATG14 and ATG38; and of the VPS34 PI3-kinase complex II composed of VPS15, VPS30, VPS34 and VPS38.

It localises to the endosome membrane. Its subcellular location is the vacuole membrane. The protein resides in the preautophagosomal structure membrane. Its function is as follows. Required for cytoplasm to vacuole transport (Cvt), autophagy, nucleophagy, and mitophagy, as a part of the autophagy-specific VPS34 PI3-kinase complex I. This complex is essential to recruit the ATG8-phosphatidylinositol conjugate and the ATG12-ATG5 conjugate to the pre-autophagosomal structure. Also involved in endosome-to-Golgi retrograde transport as part of the VPS34 PI3-kinase complex II. This second complex is required for the endosome-to-Golgi retrieval of PEP1 and KEX2, and the recruitment of VPS5 and VPS7, two components of the retromer complex, to endosomal membranes (probably through the synthesis of a specific pool of phosphatidylinositol 3-phosphate recruiting the retromer to the endosomes). Also plays a role in regulation of filamentous growth. The protein is Vacuolar protein sorting-associated protein 30 of Saccharomyces cerevisiae (strain ATCC 204508 / S288c) (Baker's yeast).